Here is a 359-residue protein sequence, read N- to C-terminus: Phospho-N-acetylmuramoyl-pentapeptide-transferase (359 aa).

Transmembrane regions (helical) follow at residues 3-23 (QILI…PVLI), 55-75 (VAIL…GLAF), 80-100 (IGAS…VGFI), 117-137 (TAKT…VLQF), 156-176 (IATV…IVSA), 187-207 (LDGL…LITF), 231-251 (LALI…WNAA), 255-275 (IFMG…LSVT), 280-300 (ILAV…VLQI), and 334-354 (FWLL…GEWL).

It belongs to the glycosyltransferase 4 family. MraY subfamily. The cofactor is Mg(2+).

Its subcellular location is the cell membrane. The enzyme catalyses UDP-N-acetyl-alpha-D-muramoyl-L-alanyl-gamma-D-glutamyl-meso-2,6-diaminopimeloyl-D-alanyl-D-alanine + di-trans,octa-cis-undecaprenyl phosphate = di-trans,octa-cis-undecaprenyl diphospho-N-acetyl-alpha-D-muramoyl-L-alanyl-D-glutamyl-meso-2,6-diaminopimeloyl-D-alanyl-D-alanine + UMP. Its pathway is cell wall biogenesis; peptidoglycan biosynthesis. Its function is as follows. Catalyzes the initial step of the lipid cycle reactions in the biosynthesis of the cell wall peptidoglycan: transfers peptidoglycan precursor phospho-MurNAc-pentapeptide from UDP-MurNAc-pentapeptide onto the lipid carrier undecaprenyl phosphate, yielding undecaprenyl-pyrophosphoryl-MurNAc-pentapeptide, known as lipid I. The polypeptide is Phospho-N-acetylmuramoyl-pentapeptide-transferase (Mycobacterium tuberculosis (strain ATCC 25177 / H37Ra)).